A 404-amino-acid chain; its full sequence is MKLPIYLDYSATTPVDPRVAQKMSECLLMDGNFGNPASRSHVFGWKAEEAVENARRQVAELVNADPREIVWTSGATESDNLAIKGVAHFYSGKGKHIITSKIEHKAVLDTCRQLEREGFEVTYLEPGEDGLITSALVEAALRDDTILVSVMHVNNEIGTVNDIAAIGELTRSRGVLFHVDAAQSTGKVEIDLDKLKVDLMSFSAHKTYGPKGIGALYVRRKPRVRIEGQMHGGGHERGMRSGTLATHQIVGMGEAFRIAKEEMAQENARVLALRDRFFAQIDGLEELYINGSMTSRVPHNLNVSFNYVEGESLIMALKDLAVSSGSACTSASLEPSYVLRALGRNDELAHSSIRFTFGRFTTEEEIDYAAKKVVEAVSKLRELSPLWDMYKEGVDLSQVEWQAH.

Residues 75-76 (AT), asparagine 155, glutamine 183, and 203-205 (SAH) contribute to the pyridoxal 5'-phosphate site. Lysine 206 carries the N6-(pyridoxal phosphate)lysine modification. Pyridoxal 5'-phosphate is bound at residue threonine 243. The active-site Cysteine persulfide intermediate is cysteine 328. Residue cysteine 328 coordinates [2Fe-2S] cluster.

Belongs to the class-V pyridoxal-phosphate-dependent aminotransferase family. NifS/IscS subfamily. As to quaternary structure, homodimer. Forms a heterotetramer with IscU, interacts with other sulfur acceptors. Pyridoxal 5'-phosphate serves as cofactor.

The protein resides in the cytoplasm. It carries out the reaction (sulfur carrier)-H + L-cysteine = (sulfur carrier)-SH + L-alanine. It participates in cofactor biosynthesis; iron-sulfur cluster biosynthesis. In terms of biological role, master enzyme that delivers sulfur to a number of partners involved in Fe-S cluster assembly, tRNA modification or cofactor biosynthesis. Catalyzes the removal of elemental sulfur atoms from cysteine to produce alanine. Functions as a sulfur delivery protein for Fe-S cluster synthesis onto IscU, an Fe-S scaffold assembly protein, as well as other S acceptor proteins. This chain is Cysteine desulfurase IscS, found in Pseudomonas aeruginosa (strain LESB58).